We begin with the raw amino-acid sequence, 163 residues long: 3-isopropylmalate dehydratase small subunit (163 aa).

This sequence belongs to the LeuD family. LeuD type 2 subfamily. As to quaternary structure, heterodimer of LeuC and LeuD.

It carries out the reaction (2R,3S)-3-isopropylmalate = (2S)-2-isopropylmalate. It functions in the pathway amino-acid biosynthesis; L-leucine biosynthesis; L-leucine from 3-methyl-2-oxobutanoate: step 2/4. In terms of biological role, catalyzes the isomerization between 2-isopropylmalate and 3-isopropylmalate, via the formation of 2-isopropylmaleate. The polypeptide is 3-isopropylmalate dehydratase small subunit (Thermococcus kodakarensis (strain ATCC BAA-918 / JCM 12380 / KOD1) (Pyrococcus kodakaraensis (strain KOD1))).